We begin with the raw amino-acid sequence, 162 residues long: Allantoicase (162 aa).

It belongs to the allantoicase family. Homohexamer. Expressed in zygote.

The enzyme catalyses allantoate + H2O = (S)-ureidoglycolate + urea. The protein operates within nitrogen metabolism; (S)-allantoin degradation; (S)-ureidoglycolate from allantoate (aminidohydrolase route): step 1/1. In terms of biological role, catalyzes the degradation of allantoate to (-)-ureidoglycolate and (+)-ureidoglycolate to glyoxylate. The chain is Allantoicase from Chlamydomonas reinhardtii (Chlamydomonas smithii).